The sequence spans 1687 residues: Protein TOPAZ1 (1687 aa).

3 disordered regions span residues 1 to 132, 596 to 632, and 938 to 969; these read MRRP…PGFD, LSRS…GNLT, and ASEI…GDFS. Residues 31-41 are compositionally biased toward gly residues; the sequence is GAAGGCGPEAG. Over residues 80–113 the composition is skewed to basic and acidic residues; sequence RRVEGRRGQVSPSDRRGLEAAKEAEFPLQTERHT. 2 stretches are compositionally biased toward polar residues: residues 598–622 and 948–963; these read RSGS…SLTG and ANTS…SENE.

Its subcellular location is the cytoplasm. It localises to the cytosol. Functionally, important for normal spermatogenesis and male fertility. Specifically required for progression to the post-meiotic stages of spermatocyte development. Seems to be necessary for normal expression levels of a number of testis-expressed gene transcripts, although its role in this process is unclear. In Macaca mulatta (Rhesus macaque), this protein is Protein TOPAZ1 (TOPAZ1).